Here is a 248-residue protein sequence, read N- to C-terminus: 3-deoxy-manno-octulosonate cytidylyltransferase (248 aa).

It belongs to the KdsB family.

It is found in the cytoplasm. It carries out the reaction 3-deoxy-alpha-D-manno-oct-2-ulosonate + CTP = CMP-3-deoxy-beta-D-manno-octulosonate + diphosphate. It functions in the pathway nucleotide-sugar biosynthesis; CMP-3-deoxy-D-manno-octulosonate biosynthesis; CMP-3-deoxy-D-manno-octulosonate from 3-deoxy-D-manno-octulosonate and CTP: step 1/1. The protein operates within bacterial outer membrane biogenesis; lipopolysaccharide biosynthesis. Activates KDO (a required 8-carbon sugar) for incorporation into bacterial lipopolysaccharide in Gram-negative bacteria. The sequence is that of 3-deoxy-manno-octulosonate cytidylyltransferase from Salmonella dublin (strain CT_02021853).